Here is a 691-residue protein sequence, read N- to C-terminus: Elongation factor G (691 aa).

Residues 8 to 282 (ERVRNIGIAA…AVVNYLPAPV (275 aa)) form the tr-type G domain. GTP-binding positions include 17 to 24 (AHIDAGKT), 81 to 85 (DTPGH), and 135 to 138 (NKMD).

It belongs to the TRAFAC class translation factor GTPase superfamily. Classic translation factor GTPase family. EF-G/EF-2 subfamily.

The protein localises to the cytoplasm. Functionally, catalyzes the GTP-dependent ribosomal translocation step during translation elongation. During this step, the ribosome changes from the pre-translocational (PRE) to the post-translocational (POST) state as the newly formed A-site-bound peptidyl-tRNA and P-site-bound deacylated tRNA move to the P and E sites, respectively. Catalyzes the coordinated movement of the two tRNA molecules, the mRNA and conformational changes in the ribosome. The polypeptide is Elongation factor G (Prochlorococcus marinus (strain NATL1A)).